Consider the following 432-residue polypeptide: 23S rRNA (uracil(1939)-C(5))-methyltransferase RlmD (432 aa).

One can recognise a TRAM domain in the interval 1–53 (MPIGKIESLDHEARGITRQEGKAIFVDGALPGETVEYASFRRKSKFELAHLVH). Residues cysteine 66, cysteine 72, cysteine 75, and cysteine 154 each coordinate [4Fe-4S] cluster. 6 residues coordinate S-adenosyl-L-methionine: glutamine 263, phenylalanine 292, asparagine 297, glutamate 313, asparagine 341, and aspartate 362. Cysteine 388 serves as the catalytic Nucleophile.

The protein belongs to the class I-like SAM-binding methyltransferase superfamily. RNA M5U methyltransferase family. RlmD subfamily.

The enzyme catalyses uridine(1939) in 23S rRNA + S-adenosyl-L-methionine = 5-methyluridine(1939) in 23S rRNA + S-adenosyl-L-homocysteine + H(+). Its function is as follows. Catalyzes the formation of 5-methyl-uridine at position 1939 (m5U1939) in 23S rRNA. In Dechloromonas aromatica (strain RCB), this protein is 23S rRNA (uracil(1939)-C(5))-methyltransferase RlmD.